The primary structure comprises 254 residues: Coenzyme F420:L-glutamate ligase (254 aa).

Residues 11-14, 40-41, and Lys45 each bind GTP; these read IPLI and ST. Residue Asp109 coordinates a divalent metal cation. GTP is bound at residue Asn112. A divalent metal cation contacts are provided by Asp150, Thr151, and Glu208. 206 to 213 provides a ligand contact to GTP; it reads MGEGAGGI.

It belongs to the CofE family. As to quaternary structure, homodimer. Mg(2+) serves as cofactor. Requires Mn(2+) as cofactor. It depends on K(+) as a cofactor.

The enzyme catalyses oxidized coenzyme F420-0 + GTP + L-glutamate = oxidized coenzyme F420-1 + GDP + phosphate + H(+). It carries out the reaction oxidized coenzyme F420-1 + GTP + L-glutamate = oxidized coenzyme F420-2 + GDP + phosphate + H(+). It participates in cofactor biosynthesis; coenzyme F420 biosynthesis. Catalyzes the GTP-dependent successive addition of two or more gamma-linked L-glutamates to the L-lactyl phosphodiester of 7,8-didemethyl-8-hydroxy-5-deazariboflavin (F420-0) to form coenzyme F420-0-glutamyl-glutamate (F420-2) or polyglutamated F420 derivatives. The polypeptide is Coenzyme F420:L-glutamate ligase (Methanosarcina mazei (strain ATCC BAA-159 / DSM 3647 / Goe1 / Go1 / JCM 11833 / OCM 88) (Methanosarcina frisia)).